Reading from the N-terminus, the 127-residue chain is Glycine cleavage system H protein (127 aa).

In terms of domain architecture, Lipoyl-binding spans 22 to 104 (TVRIGITDFA…YDKAWMIVIE (83 aa)). Lys-63 is modified (N6-lipoyllysine).

The protein belongs to the GcvH family. In terms of assembly, the glycine cleavage system is composed of four proteins: P, T, L and H. The cofactor is (R)-lipoate.

The glycine cleavage system catalyzes the degradation of glycine. The H protein shuttles the methylamine group of glycine from the P protein to the T protein. In terms of biological role, is also involved in protein lipoylation via its role as an octanoyl/lipoyl carrier protein intermediate. This Anoxybacillus flavithermus (strain DSM 21510 / WK1) protein is Glycine cleavage system H protein.